Here is an 88-residue protein sequence, read N- to C-terminus: MSSFDQTMQFHFPEEPAETNVREVLLTVYDALQEKGYNPINQIVGYLLSGDPAYIPRHKDARTLIRKIERDELIEELVKFYLQGQRKG.

Belongs to the UPF0297 family.

The polypeptide is UPF0297 protein GTNG_2488 (Geobacillus thermodenitrificans (strain NG80-2)).